The primary structure comprises 417 residues: Peptidyl-Asp metalloendopeptidase (417 aa).

A signal peptide spans 1–25 (MLSRSIGKAAGGLVLGLSVAAAAHA). His-327 contacts Zn(2+). Residue Glu-328 is part of the active site. Zn(2+) is bound by residues His-331 and His-337.

The protein belongs to the peptidase M72 family. The cofactor is Zn(2+).

It carries out the reaction Cleavage of Xaa-|-Asp, Xaa-|-Glu and Xaa-|-cysteic acid bonds.. Its function is as follows. Metalloprotease, specifically cleaves on the N-terminal side of aspartyl, glutamyl and cysteic acid residues. The protein is Peptidyl-Asp metalloendopeptidase of Stenotrophomonas maltophilia (strain K279a).